The primary structure comprises 208 residues: Uracil phosphoribosyltransferase (208 aa).

Residues R78, R103, and 130 to 138 (DPMLATGGS) contribute to the 5-phospho-alpha-D-ribose 1-diphosphate site. Uracil is bound by residues I193 and 198 to 200 (GDA). D199 is a binding site for 5-phospho-alpha-D-ribose 1-diphosphate.

This sequence belongs to the UPRTase family. Mg(2+) is required as a cofactor.

The catalysed reaction is UMP + diphosphate = 5-phospho-alpha-D-ribose 1-diphosphate + uracil. It participates in pyrimidine metabolism; UMP biosynthesis via salvage pathway; UMP from uracil: step 1/1. With respect to regulation, allosterically activated by GTP. Catalyzes the conversion of uracil and 5-phospho-alpha-D-ribose 1-diphosphate (PRPP) to UMP and diphosphate. The polypeptide is Uracil phosphoribosyltransferase (Neisseria meningitidis serogroup C (strain 053442)).